The following is a 735-amino-acid chain: E3 ubiquitin-protein ligase SH3RF2 (735 aa).

An RING-type zinc finger spans residues 12 to 53; sequence CPVCFEKLDVTAKVLPCQHTFCKPCLQRIFKAHKELRCPECR. SH3 domains are found at residues 125–184 and 187–252; these read DGVP…VIKQ and QPPP…PNLS. Disordered stretches follow at residues 260 to 301 and 335 to 373; these read SKGH…GSGQ and TSPS…STAM. Polar residues predominate over residues 273 to 289; that stretch reads LMSSPSRGKATNTSTLR. Residues 373-466 are interaction with PAK4; it reads MVSVPSSQQH…RHPTVCTTWA (94 aa). Residues 383 to 444 form the SH3 3 domain; that stretch reads LSTNMFVALH…PSDYVIPVFS (62 aa). Disordered regions lie at residues 472-534, 612-637, and 649-735; these read VSSQ…PVQS, ETPI…KPEN, and VRFQ…FPSK. Polar residues predominate over residues 523-534; it reads RKNGSLQRPVQS. Positions 617–627 are enriched in pro residues; the sequence is SEPPPKPPASA. An interaction with PPP1CA region spans residues 647–652; sequence KTVRFQ. Residue serine 655 is modified to Phosphoserine. The span at 715 to 735 shows a compositional bias: polar residues; sequence FSKTTPPVSTASVSQTLFPSK.

This sequence belongs to the SH3RF family. Interacts with FASLG and PPP1CA. Interacts with PAK4 and TNFRSF1A. Interacts with DLK1, MAP3K10, MAPK8IP1/JIP1, MAPK8IP2/JIP2 and MAPK8IP3/JIP3. Interacts with RAC1 (both active GTP- or inactive GDP-bound forms). In terms of processing, autoubiquitinated.

The protein resides in the nucleus. The catalysed reaction is S-ubiquitinyl-[E2 ubiquitin-conjugating enzyme]-L-cysteine + [acceptor protein]-L-lysine = [E2 ubiquitin-conjugating enzyme]-L-cysteine + N(6)-ubiquitinyl-[acceptor protein]-L-lysine.. Its pathway is protein modification; protein ubiquitination. Its function is as follows. Has E3 ubiquitin-protein ligase activity. Acts as an anti-apoptotic regulator of the JNK pathway by ubiquitinating and promoting the degradation of SH3RF1, a scaffold protein that is required for pro-apoptotic JNK activation. Facilitates TNF-alpha-mediated recruitment of adapter proteins TRADD and RIPK1 to TNFRSF1A and regulates PAK4 protein stability via inhibition of its ubiquitin-mediated proteasomal degradation. Inhibits PPP1CA phosphatase activity. In Rattus norvegicus (Rat), this protein is E3 ubiquitin-protein ligase SH3RF2 (Sh3rf2).